The sequence spans 362 residues: Methionine import ATP-binding protein MetN (362 aa).

An ABC transporter domain is found at 2 to 241 (IHIKNLSKTY…PQHDVTRAMV (240 aa)). 38-45 (GPSGAGKS) lines the ATP pocket.

It belongs to the ABC transporter superfamily. Methionine importer (TC 3.A.1.24) family. The complex is composed of two ATP-binding proteins (MetN), two transmembrane proteins (MetI) and a solute-binding protein (MetQ).

It localises to the cell inner membrane. It catalyses the reaction L-methionine(out) + ATP + H2O = L-methionine(in) + ADP + phosphate + H(+). The catalysed reaction is D-methionine(out) + ATP + H2O = D-methionine(in) + ADP + phosphate + H(+). Part of the ABC transporter complex MetNIQ involved in methionine import. Responsible for energy coupling to the transport system. In Bordetella avium (strain 197N), this protein is Methionine import ATP-binding protein MetN.